A 303-amino-acid chain; its full sequence is Bidirectional sugar transporter SWEET14 (303 aa).

Residues Met1–Pro9 lie on the Extracellular side of the membrane. A helical transmembrane segment spans residues Trp10 to Leu30. A MtN3/slv 1 domain is found at Ala13–Lys98. The Cytoplasmic portion of the chain corresponds to Pro31–Gly44. The helical transmembrane segment at Phe45–Leu65 threads the bilayer. At Leu66–Leu72 the chain is on the extracellular side. The chain crosses the membrane as a helical span at residues Leu73–Val93. Residues Tyr94–Lys105 lie on the Cytoplasmic side of the membrane. The chain crosses the membrane as a helical span at residues Leu106–Ser126. Over Ala127 to Val133 the chain is Extracellular. The chain crosses the membrane as a helical span at residues Val134–Ile154. Positions Val134–Ser217 constitute a MtN3/slv 2 domain. Over Arg155 to Pro167 the chain is Cytoplasmic. The chain crosses the membrane as a helical span at residues Phe168–Ile188. At Lys189–Tyr192 the chain is on the extracellular side. The chain crosses the membrane as a helical span at residues Val193–Met213. Residues Tyr214–Ala303 lie on the Cytoplasmic side of the membrane. The interval His266–Ala290 is disordered.

Belongs to the SWEET sugar transporter family. In terms of assembly, forms homooligomers and/or heterooligomers.

The protein resides in the cell membrane. Its function is as follows. Mediates both low-affinity uptake and efflux of sugar across the plasma membrane. Functionally, confers blight susceptibility. Confers TAL effector-mediated susceptibility to Xanthomonas oryzae pv. oryzae. The sequence is that of Bidirectional sugar transporter SWEET14 (SWEET14) from Oryza sativa subsp. japonica (Rice).